We begin with the raw amino-acid sequence, 522 residues long: 2-isopropylmalate synthase (522 aa).

The Pyruvate carboxyltransferase domain maps to V5–H267. D14, H202, H204, and N238 together coordinate Mn(2+). Positions Q392 to V522 are regulatory domain.

It belongs to the alpha-IPM synthase/homocitrate synthase family. LeuA type 1 subfamily. In terms of assembly, homodimer. Mn(2+) serves as cofactor.

Its subcellular location is the cytoplasm. The enzyme catalyses 3-methyl-2-oxobutanoate + acetyl-CoA + H2O = (2S)-2-isopropylmalate + CoA + H(+). It participates in amino-acid biosynthesis; L-leucine biosynthesis; L-leucine from 3-methyl-2-oxobutanoate: step 1/4. Catalyzes the condensation of the acetyl group of acetyl-CoA with 3-methyl-2-oxobutanoate (2-ketoisovalerate) to form 3-carboxy-3-hydroxy-4-methylpentanoate (2-isopropylmalate). This is 2-isopropylmalate synthase from Shewanella sp. (strain MR-4).